A 239-amino-acid chain; its full sequence is DnaA regulatory inactivator Hda (239 aa).

This sequence belongs to the DnaA family. HdA subfamily. The active form seems to be an ADP-bound monomer. Forms the RIDA complex (regulatory inactivation of DnaA) of ATP-DnaA, ADP-Hda and the DNA-loaded beta sliding clamp (dnaN).

Its function is as follows. Mediates the interaction of DNA replication initiator protein DnaA with DNA polymerase subunit beta sliding clamp (dnaN). Stimulates hydrolysis of ATP-DnaA to ADP-DnaA, rendering DnaA inactive for reinitiation, a process called regulatory inhibition of DnaA or RIDA. This is DnaA regulatory inactivator Hda from Yersinia enterocolitica serotype O:8 / biotype 1B (strain NCTC 13174 / 8081).